Reading from the N-terminus, the 1514-residue chain is Neurexin-1 (1514 aa).

A signal peptide spans 1–30; the sequence is MGTALVQRGGCCLLCLSLLLLGCWAELGSG. A Laminin G-like 1 domain is found at 31–217; that stretch reads LEFPGAEGQW…PPNSGGGSPC (187 aa). At 31-1438 the chain is on the extracellular side; sequence LEFPGAEGQW…EVIRESSSTT (1408 aa). N-linked (GlcNAc...) asparagine glycosylation is found at Asn-125 and Asn-190. The tract at residues 197–221 is disordered; that stretch reads VDGGEVKLDDEPPNSGGGSPCEAGE. The EGF-like 1 domain maps to 219-256; that stretch reads AGEEGEGGVCLNGGVCSVVDDQAVCDCSRTGFRGKDCS. 2 disulfide bridges follow: Cys-228–Cys-243 and Cys-245–Cys-255. 2 Laminin G-like domains span residues 283–480 and 487–679; these read IATF…AFKC and DPIT…KPSC. The Ca(2+) site is built by Asp-329, Leu-346, and Met-414. Intrachain disulfides connect Cys-444–Cys-480, Cys-650–Cys-679, Cys-687–Cys-698, Cys-692–Cys-707, and Cys-709–Cys-719. An EGF-like 2 domain is found at 683–720; it reads TAKPCLSNPCKNNGMCRDGWNRYVCDCSGTGYLGRSCE. 2 consecutive Laminin G-like domains span residues 725-898 and 912-1087; these read VLSY…IDYC and DPVT…ERGC. Ca(2+)-binding residues include Asp-772 and Leu-789. Asn-797 carries N-linked (GlcNAc...) asparagine glycosylation. Arg-848 contributes to the Ca(2+) binding site. 5 disulfide bridges follow: Cys-890-Cys-898, Cys-1059-Cys-1087, Cys-1094-Cys-1105, Cys-1099-Cys-1114, and Cys-1116-Cys-1126. An EGF-like 3 domain is found at 1090–1127; it reads PSTTCQEDSCSNQGVCLQQWDGFSCDCSMTSFSGPLCN. Residues 1133 to 1331 enclose the Laminin G-like 6 domain; sequence YIFSKGGGQI…DANIAIVGNV (199 aa). The Ca(2+) site is built by Asp-1183 and Val-1200. The N-linked (GlcNAc...) asparagine glycan is linked to Asn-1230. Ile-1282 and Asn-1284 together coordinate Ca(2+). Ser-1392 carries O-linked (Xyl...) (heparan sulfate) serine glycosylation. A disordered region spans residues 1396 to 1427; that stretch reads PSDDEDIDPCEPSSGGLANPTRVGGREPYPGS. The helical transmembrane segment at 1439–1459 threads the bilayer; sequence GMVVGIVAAAALCILILLYAM. At 1460-1514 the chain is on the cytoplasmic side; it reads YKYRNRDEGSYHVDESRNYISNSAQSNGAVVKEKQPSSAKSANKNKKNKDKEYYV. The tract at residues 1481–1507 is interaction with CASK; it reads NSAQSNGAVVKEKQPSSAKSANKNKKN. The disordered stretch occupies residues 1481 to 1514; that stretch reads NSAQSNGAVVKEKQPSSAKSANKNKKNKDKEYYV.

The protein belongs to the neurexin family. In terms of assembly, interacts (via laminin G-like domain 2 and/or laminin G-like domain 6) with NLGN1 forming a heterotetramer, where one NLGN1 dimer interacts with one NRXN1 dimer. Also interacts (via laminin G-like domain 2 and/or laminin G-like domain 6) with NLGN2, NLGN3 and NLGN4L; interactions with NLGN1, NLGN2, NLGN3 and NLGN4L are calcium-dependent. Interacts (via cytoplasmic C-terminal region) with CASK (via the PDZ, SH3 and guanylate kinase-like domains). Interacts (via cytoplasmic C-terminus) with CASKIN1 and APBA1. Interacts (via laminin G-like domain 2) with NXPH1 and NXPH3. Alpha-type isoforms (neurexin-1-alpha) interact (via laminin G-like domain 2 and/or laminin G-like domain 6) with DAG1 (via alpha-dystroglycan chain). Interacts with LRRTM1, LRRTM2, LRRTM3 and LRRTM4. Interacts with SYT13 and SYTL1. Interacts with CBLN1, CBLN2 and, less avidly, with CBLN4. Interacts with CLSTN3. O-glycosylated; contains heparan sulfate. Heparan sulfate attachment is required for synapse development by mediating interactions with neuroligins and LRRTM2.

The protein localises to the presynaptic cell membrane. In terms of biological role, cell surface protein involved in cell-cell-interactions, exocytosis of secretory granules and regulation of signal transmission. Function is isoform-specific. Alpha-type isoforms have a long N-terminus with six laminin G-like domains and play an important role in synaptic signal transmission. Alpha-type isoforms play a role in the regulation of calcium channel activity and Ca(2+)-triggered neurotransmitter release at synapses and at neuromuscular junctions. They play an important role in Ca(2+)-triggered exocytosis of secretory granules in pituitary gland. They may affect their functions at synapses and in endocrine cells via their interactions with proteins from the exocytotic machinery. Likewise, alpha-type isoforms play a role in regulating the activity of postsynaptic NMDA receptors, a subtype of glutamate-gated ion channels. Both alpha-type and beta-type isoforms may play a role in the formation or maintenance of synaptic junctions via their interactions (via the extracellular domains) with neuroligin family members, CBLN1 or CBLN2. In vitro, triggers the de novo formation of presynaptic structures. May be involved in specification of excitatory synapses. Alpha-type isoforms were first identified as receptors for alpha-latrotoxin from spider venom. The sequence is that of Neurexin-1 (Nrxn1) from Mus musculus (Mouse).